The following is a 258-amino-acid chain: Peptidase inhibitor 15 (258 aa).

Positions 1–21 (MIMNSAVSLVILLSLLCEAHT) are cleaved as a signal peptide. A propeptide spanning residues 22 to 60 (VVLLNPTDSSLPANNFTDTEAALSTPLESADIPKARRKR) is cleaved from the precursor. 2 N-linked (GlcNAc...) asparagine glycosylation sites follow: Asn36 and Asn124. The SCP domain occupies 71 to 211 (LDYHNQVRGK…RRAVYLVCNY (141 aa)).

Belongs to the CRISP family. Post-translationally, N-glycosylated. As to expression, weakly expressed. Expressed at low level in prostate, mammary gland, salivary gland and thyroid gland.

The protein localises to the secreted. In terms of biological role, serine protease inhibitor which displays weak inhibitory activity against trypsin. May play a role in facial patterning during embryonic development. The protein is Peptidase inhibitor 15 (Pi15) of Mus musculus (Mouse).